The following is a 1094-amino-acid chain: Centrosomal protein of 128 kDa (1094 aa).

Positions 1 to 29 (MAESSSESDHFRCRDRLSPWAARSTHRGT) are disordered. Basic and acidic residues predominate over residues 7–17 (ESDHFRCRDRL). Ser31 carries the post-translational modification Phosphoserine. A disordered region spans residues 115 to 140 (DGGTGSELHHFPPTSPLKDYGDPQGI). Coiled-coil stretches lie at residues 190-827 (SRSD…QESI) and 879-959 (EELK…IALE). A phosphoserine mark is found at Ser249, Ser291, and Ser331. Residues 319–345 (AEGDRKGLQHQVSQISKQQSNYQDEQG) are disordered. Over residues 328–342 (HQVSQISKQQSNYQD) the composition is skewed to polar residues. The span at 987–999 (DSCSSSERTDGRY) shows a compositional bias: basic and acidic residues. Residues 987 to 1018 (DSCSSSERTDGRYSKYRVRRNSLQHHQDDTKY) form a disordered region. Over residues 1000–1009 (SKYRVRRNSL) the composition is skewed to basic residues. Ser1061 bears the Phosphoserine mark. The disordered stretch occupies residues 1067–1094 (VAPDSASNKEDATMNGTSSQPKKEEYGS).

The protein localises to the cytoplasm. Its subcellular location is the cytoskeleton. It is found in the microtubule organizing center. The protein resides in the centrosome. It localises to the centriole. The protein localises to the spindle pole. This is Centrosomal protein of 128 kDa (CEP128) from Homo sapiens (Human).